Consider the following 348-residue polypeptide: Dihydroorotase (348 aa).

2 residues coordinate Zn(2+): His17 and His19. Substrate is bound by residues 19 to 21 and Asn45; that span reads HLR. Residues Lys103, His140, and His178 each coordinate Zn(2+). At Lys103 the chain carries N6-carboxylysine. His140 serves as a coordination point for substrate. Leu223 contacts substrate. Asp251 is a Zn(2+) binding site. Residue Asp251 is part of the active site. Residues His255 and Ala267 each contribute to the substrate site.

The protein belongs to the metallo-dependent hydrolases superfamily. DHOase family. Class II DHOase subfamily. Homodimer. Zn(2+) serves as cofactor.

It carries out the reaction (S)-dihydroorotate + H2O = N-carbamoyl-L-aspartate + H(+). It functions in the pathway pyrimidine metabolism; UMP biosynthesis via de novo pathway; (S)-dihydroorotate from bicarbonate: step 3/3. Catalyzes the reversible cyclization of carbamoyl aspartate to dihydroorotate. The polypeptide is Dihydroorotase (Escherichia coli O6:H1 (strain CFT073 / ATCC 700928 / UPEC)).